We begin with the raw amino-acid sequence, 494 residues long: ATP synthase subunit alpha, chloroplastic (494 aa).

Position 170 to 177 (170 to 177 (GDRQTGKT)) interacts with ATP.

This sequence belongs to the ATPase alpha/beta chains family. In terms of assembly, F-type ATPases have 2 components, CF(1) - the catalytic core - and CF(0) - the membrane proton channel. CF(1) has five subunits: alpha(3), beta(3), gamma(1), delta(1), epsilon(1). CF(0) has four main subunits: a, b, b' and c.

The protein localises to the plastid. Its subcellular location is the chloroplast thylakoid membrane. It carries out the reaction ATP + H2O + 4 H(+)(in) = ADP + phosphate + 5 H(+)(out). Produces ATP from ADP in the presence of a proton gradient across the membrane. The alpha chain is a regulatory subunit. This is ATP synthase subunit alpha, chloroplastic from Pinus thunbergii (Japanese black pine).